A 160-amino-acid chain; its full sequence is Cytochrome b6-f complex subunit 4 (160 aa).

A run of 3 helical transmembrane segments spans residues 36 to 56 (ILFTFPICIAGTIGLITGLAI), 95 to 115 (LLGIACQGAIPLGLMMVPFIE), and 131 to 151 (AVFLFGTAVTLWLGAGACFPI).

This sequence belongs to the cytochrome b family. PetD subfamily. As to quaternary structure, the 4 large subunits of the cytochrome b6-f complex are cytochrome b6, subunit IV (17 kDa polypeptide, PetD), cytochrome f and the Rieske protein, while the 4 small subunits are PetG, PetL, PetM and PetN. The complex functions as a dimer.

The protein localises to the cellular thylakoid membrane. Functionally, component of the cytochrome b6-f complex, which mediates electron transfer between photosystem II (PSII) and photosystem I (PSI), cyclic electron flow around PSI, and state transitions. This is Cytochrome b6-f complex subunit 4 from Picosynechococcus sp. (strain ATCC 27264 / PCC 7002 / PR-6) (Agmenellum quadruplicatum).